The following is a 455-amino-acid chain: Gamma-glutamyl phosphate reductase (455 aa).

The protein belongs to the gamma-glutamyl phosphate reductase family.

The protein localises to the cytoplasm. It carries out the reaction L-glutamate 5-semialdehyde + phosphate + NADP(+) = L-glutamyl 5-phosphate + NADPH + H(+). It participates in amino-acid biosynthesis; L-proline biosynthesis; L-glutamate 5-semialdehyde from L-glutamate: step 2/2. Functionally, catalyzes the NADPH-dependent reduction of L-glutamate 5-phosphate into L-glutamate 5-semialdehyde and phosphate. The product spontaneously undergoes cyclization to form 1-pyrroline-5-carboxylate. This Synechococcus sp. (strain JA-2-3B'a(2-13)) (Cyanobacteria bacterium Yellowstone B-Prime) protein is Gamma-glutamyl phosphate reductase.